The chain runs to 300 residues: Metal tolerance protein 12 (300 aa).

Residues Met1–Lys26 are Cytoplasmic-facing. Residues Ile27–Met47 form a helical membrane-spanning segment. Topologically, residues Ser48–Ser50 are vacuolar. Residues Leu51–Leu71 traverse the membrane as a helical segment. At Tyr72–Arg91 the chain is on the cytoplasmic side. A helical membrane pass occupies residues Phe92–Val112. Topologically, residues Leu113 to Asn128 are vacuolar. Residues Ser129–His149 form a helical membrane-spanning segment. Residues Glu150 to Gly160 are Cytoplasmic-facing. The helical transmembrane segment at Ile161–Leu181 threads the bilayer. Residues Ile182 to Gly186 lie on the Vacuolar side of the membrane. The helical transmembrane segment at Trp187–Ile207 threads the bilayer. The Cytoplasmic segment spans residues Pro208 to Ser300.

It belongs to the cation diffusion facilitator (CDF) transporter (TC 2.A.4) family. SLC30A subfamily.

It is found in the vacuole membrane. Involved in sequestration of excess metal in the cytoplasm into vacuoles to maintain metal homeostasis. The chain is Metal tolerance protein 12 (MTP12) from Arabidopsis thaliana (Mouse-ear cress).